Here is a 692-residue protein sequence, read N- to C-terminus: ATPase synthesis protein 25, mitochondrial (692 aa).

A mitochondrion-targeting transit peptide spans 1 to 73 (MNRILSKGPR…DGNGNTHRTT (73 aa)). 3 disordered regions span residues 44-83 (PRLRSEDSPSSSQPLKPDPNDGNGNTHRTTSTASSQHTPW), 286-314 (RQVSIDTKSDAPHEEVRASTPVQNSSSDH), and 338-373 (CRLLGPQTEDNQDDGLDDGLDMSPDSNSTGTDHLAA). Over residues 65–81 (GNGNTHRTTSTASSQHT) the composition is skewed to polar residues. Positions 292–302 (TKSDAPHEEVR) are enriched in basic and acidic residues. The span at 347-357 (DNQDDGLDDGL) shows a compositional bias: acidic residues.

Belongs to the ATP25 family.

It localises to the mitochondrion inner membrane. Its function is as follows. Probable mitochondrial mRNA stabilization factor. The sequence is that of ATPase synthesis protein 25, mitochondrial (atp25) from Neosartorya fischeri (strain ATCC 1020 / DSM 3700 / CBS 544.65 / FGSC A1164 / JCM 1740 / NRRL 181 / WB 181) (Aspergillus fischerianus).